The chain runs to 470 residues: Serine carboxypeptidase ctsa-4.1 (470 aa).

A signal peptide spans 1-19 (MKLLSILFIFVSSYSFCLA). Asparagine 132 is a glycosylation site (N-linked (GlcNAc...) asparagine). Residue serine 169 is part of the active site. N-linked (GlcNAc...) asparagine glycosylation occurs at asparagine 316. Residue aspartate 380 is part of the active site. Residue asparagine 396 is glycosylated (N-linked (GlcNAc...) asparagine). Histidine 441 is an active-site residue.

Belongs to the peptidase S10 family.

It catalyses the reaction Release of a C-terminal amino acid with broad specificity.. The chain is Serine carboxypeptidase ctsa-4.1 from Caenorhabditis elegans.